A 304-amino-acid chain; its full sequence is Small ribosomal subunit protein uS3 (304 aa).

Residues 17-86 (MDEYFAKQLS…NPQIDAQEVK (70 aa)) enclose the KH type-2 domain.

It belongs to the universal ribosomal protein uS3 family. As to quaternary structure, part of the 30S ribosomal subunit.

Binds the lower part of the 30S subunit head. The sequence is that of Small ribosomal subunit protein uS3 from Methanococcoides burtonii (strain DSM 6242 / NBRC 107633 / OCM 468 / ACE-M).